A 320-amino-acid polypeptide reads, in one-letter code: MPEPGPRMNGFSLGELCWLFCCPPCPSRIAAKLAFLPPEPTYTVLAPEQRAPAPAATPAPAPAAQPAPAEEGAGPGACSLHLSERADWQYSQRELDAVEVFFSRTARDNRLGCMFVRCAPSSRYTLLFSHGNAVDLGQMCSFYIGLGSRINCNIFSYDYSGYGVSSGKPSEKNLYADIDAAWQALRTRYGVSPENIILYGQSIGTVPTVDLASRYECAAVILHSPLMSGLRVAFPDTRKTYCFDAFPSIDKISKVTSPVLVIHGTEDEVIDFSHGLAMYERCPRAVEPLWVEGAGHNDIELYAQYLERLKQFISHELPNS.

Residues 50–75 are disordered; that stretch reads RAPAPAATPAPAPAAQPAPAEEGAGP. Positions 55 to 65 are enriched in pro residues; that stretch reads AATPAPAPAAQ. Catalysis depends on charge relay system residues Ser-202, Asp-267, and His-296.

The protein belongs to the AB hydrolase superfamily. ABHD17 family. Post-translationally, palmitoylated on cysteine residues located in a cysteine cluster at the N-terminus which promotes membrane localization. Palmitoylation is required for post-synaptic localization and for depalmitoylating activity towards DLG4/PSD95.

The protein resides in the recycling endosome membrane. Its subcellular location is the cell projection. The protein localises to the dendritic spine. It is found in the postsynaptic density membrane. The catalysed reaction is S-hexadecanoyl-L-cysteinyl-[protein] + H2O = L-cysteinyl-[protein] + hexadecanoate + H(+). Its function is as follows. Hydrolyzes fatty acids from S-acylated cysteine residues in proteins. Has depalmitoylating activity towards DLG4/PSD95. The sequence is that of Alpha/beta hydrolase domain-containing protein 17C from Mus musculus (Mouse).